The sequence spans 742 residues: NAD(P)H-quinone oxidoreductase subunit 5, chloroplastic (742 aa).

Helical transmembrane passes span 9 to 29 (WIIP…LLLI), 40 to 60 (WAFP…NLAF), 89 to 109 (IDPL…MVLI), 125 to 145 (FAYM…SNLI), 147 to 167 (IYIF…FWFT), 185 to 205 (GDFG…SFEF), 228 to 248 (AFLL…HVWL), 256 to 276 (TPIS…FLVA), 288 to 308 (IMNI…TLAL), 325 to 345 (LGYI…FHLI), 352 to 372 (ALLF…VGYS), 394 to 414 (TTFL…CFWS), 423 to 443 (WLYS…TAFY), 544 to 564 (YPLL…IPLV), 599 to 619 (FFIN…LAFI), and 720 to 740 (ISFY…FLFL).

The protein belongs to the complex I subunit 5 family. NDH is composed of at least 16 different subunits, 5 of which are encoded in the nucleus.

It localises to the plastid. The protein resides in the chloroplast thylakoid membrane. It carries out the reaction a plastoquinone + NADH + (n+1) H(+)(in) = a plastoquinol + NAD(+) + n H(+)(out). The enzyme catalyses a plastoquinone + NADPH + (n+1) H(+)(in) = a plastoquinol + NADP(+) + n H(+)(out). Its function is as follows. NDH shuttles electrons from NAD(P)H:plastoquinone, via FMN and iron-sulfur (Fe-S) centers, to quinones in the photosynthetic chain and possibly in a chloroplast respiratory chain. The immediate electron acceptor for the enzyme in this species is believed to be plastoquinone. Couples the redox reaction to proton translocation, and thus conserves the redox energy in a proton gradient. The polypeptide is NAD(P)H-quinone oxidoreductase subunit 5, chloroplastic (ndhF) (Lemna minor (Common duckweed)).